Consider the following 246-residue polypeptide: UDP-N-acetyl-D-mannosaminuronic acid transferase (246 aa).

Belongs to the glycosyltransferase 26 family.

It catalyses the reaction UDP-N-acetyl-alpha-D-mannosaminouronate + N-acetyl-alpha-D-glucosaminyl-di-trans,octa-cis-undecaprenyl diphosphate = beta-D-ManNAcA-(1-&gt;4)-alpha-D-GlcNAc-di-trans,octa-cis-undecaprenyl diphosphate + UDP + H(+). It functions in the pathway bacterial outer membrane biogenesis; enterobacterial common antigen biosynthesis. Functionally, catalyzes the synthesis of Und-PP-GlcNAc-ManNAcA (Lipid II), the second lipid-linked intermediate involved in enterobacterial common antigen (ECA) synthesis. The chain is UDP-N-acetyl-D-mannosaminuronic acid transferase from Shigella flexneri.